We begin with the raw amino-acid sequence, 290 residues long: MLKTIQDKARHRTRPLWAWLKLLWQRIDEDNMTTLAGNLAYVSLLSLVPLVAVVFALFAAFPMFSDVSIQLRHFIFANFLPATGDVIQRYIEQFVANSNKMTAVGACGLIVTALLLMYSIDSALNTIWRSKRARPKIYSFAVYWMILTLGPLLAGASLAISSYLLSLRWASDLNTVIDNVLRIFPLLLSWISFWLLYSIVPTIRVPNRDAIVGAFVAALLFEAGKKGFALYITMFPSYQLIYGVLAVIPILFVWVYWTWCIVLLGAEITVTLGEYHKLKQAAEQEEDDEP.

A run of 6 helical transmembrane segments spans residues 44-64, 104-124, 140-160, 183-203, 210-230, and 244-264; these read LLSL…FPMF, VGAC…DSAL, FAVY…SLAI, IFPL…VPTI, AIVG…GFAL, and VLAV…IVLL.

It belongs to the UPF0761 family.

It is found in the cell inner membrane. The chain is UPF0761 membrane protein YihY from Shigella boydii serotype 4 (strain Sb227).